Consider the following 647-residue polypeptide: Pumilio homolog 3 (647 aa).

Positions 1–10 (MEVKGKKKFT) are enriched in basic residues. A disordered region spans residues 1-123 (MEVKGKKKFT…KKKKELKQSR (123 aa)). An N6-acetyllysine modification is found at Lys33. Residues 59 to 68 (PGKKGVKQFK) show a composition bias toward basic residues. The span at 102-123 (SGAKKPKWDDFKKKKKELKQSR) shows a compositional bias: basic and acidic residues. The Nuclear localization signal motif lies at 105-117 (KKPKWDDFKKKKK). The 368-residue stretch at 142–509 (ESLRRKDCDK…VVLDKSACVL (368 aa)) folds into the PUM-HD domain. Pumilio repeat units lie at residues 176–211 (HDSTRVIQCFIQYGNEEQRKQAFQELQGDLVELSKA), 212–247 (KYSRNIVKKFLMYGSKPQVAEIIRSFKGHVRKMLRH), 248–276 (SEASAIVEYAYNDKAILEQRNMLTEELYG), 288–324 (PTLDKVLELQPAKLELIMDEMKQILTPMAQKEAVIKH), 325–360 (SLVHKVFLDFFTYAPPKPRSELIEAIREAVVYLAHT), 361–396 (HDGARVAMHCLWHGTPKDRKVIVKTMKTYVEKVANG), 397–434 (QYSHLVLLAAFDCIDDTKLVKQIIISEIISSLPSIVND), 435–503 (KYGR…VVLD), 504–550 (KSAC…VAEH), 551–595 (PAGH…WASI), and 596–635 (NRGAIILSSLLQSCDQEVVNKVKGGLKPLIPTLEKNKSSS).

As to quaternary structure, interacts with PARP1 (via catalytic domain). As to expression, in the adult eye, expressed primarily in retinal ganglion cells and, to a lesser extent, in the pigmented cells.

It is found in the nucleus. It localises to the nucleolus. The protein resides in the nucleoplasm. The protein localises to the chromosome. Functionally, inhibits the poly(ADP-ribosyl)ation activity of PARP1 and the degradation of PARP1 by CASP3 following genotoxic stress. Binds to double-stranded RNA or DNA without sequence specificity. Involved in development of the eye and of primordial germ cells. The protein is Pumilio homolog 3 of Mus musculus (Mouse).